The following is a 354-amino-acid chain: Uroporphyrinogen decarboxylase (354 aa).

Substrate contacts are provided by residues 27 to 31, D77, Y154, S209, and H327; that span reads RQAGR.

Belongs to the uroporphyrinogen decarboxylase family. In terms of assembly, homodimer.

The protein localises to the cytoplasm. The enzyme catalyses uroporphyrinogen III + 4 H(+) = coproporphyrinogen III + 4 CO2. It functions in the pathway porphyrin-containing compound metabolism; protoporphyrin-IX biosynthesis; coproporphyrinogen-III from 5-aminolevulinate: step 4/4. In terms of biological role, catalyzes the decarboxylation of four acetate groups of uroporphyrinogen-III to yield coproporphyrinogen-III. In Shewanella piezotolerans (strain WP3 / JCM 13877), this protein is Uroporphyrinogen decarboxylase.